Reading from the N-terminus, the 205-residue chain is High frequency lysogenization protein HflD homolog (205 aa).

It belongs to the HflD family.

The protein localises to the cytoplasm. It is found in the cell inner membrane. The chain is High frequency lysogenization protein HflD homolog from Haemophilus influenzae (strain PittEE).